We begin with the raw amino-acid sequence, 232 residues long: MILAANFKTNHTRKSTRHYLERLSNFLFETSCEHDIFLFPPPLALDFFDDIGGVCIGTQNAYPAPSGAFTGEVGSEQLEELAIQTILIGHSERRGILGESQAFCAEKFRYYASLGYTIFYCIGESLEVRRAGIEATIRHNLSQLEGIDLSYPKLIIAYEPIWAIGTGVSASLEQIQETHAALKAHLSCPLLYGGSVNLSNIAEILALPEVDGALIGSASLKVEDFCQMIQKI.

Asn-6–Lys-8 provides a ligand contact to substrate. The active-site Electrophile is the His-90. Glu-159 functions as the Proton acceptor in the catalytic mechanism. 2 residues coordinate substrate: Gly-165 and Ser-195.

This sequence belongs to the triosephosphate isomerase family. In terms of assembly, homodimer.

It localises to the cytoplasm. It catalyses the reaction D-glyceraldehyde 3-phosphate = dihydroxyacetone phosphate. It participates in carbohydrate biosynthesis; gluconeogenesis. It functions in the pathway carbohydrate degradation; glycolysis; D-glyceraldehyde 3-phosphate from glycerone phosphate: step 1/1. Involved in the gluconeogenesis. Catalyzes stereospecifically the conversion of dihydroxyacetone phosphate (DHAP) to D-glyceraldehyde-3-phosphate (G3P). The sequence is that of Triosephosphate isomerase from Wolinella succinogenes (strain ATCC 29543 / DSM 1740 / CCUG 13145 / JCM 31913 / LMG 7466 / NCTC 11488 / FDC 602W) (Vibrio succinogenes).